A 153-amino-acid chain; its full sequence is Large ribosomal subunit protein uL22 (153 aa).

This sequence belongs to the universal ribosomal protein uL22 family. Part of the 50S ribosomal subunit.

Its function is as follows. This protein binds specifically to 23S rRNA. It makes multiple contacts with different domains of the 23S rRNA in the assembled 50S subunit and ribosome. Functionally, the globular domain of the protein is located near the polypeptide exit tunnel on the outside of the subunit, while an extended beta-hairpin is found that lines the wall of the exit tunnel in the center of the 70S ribosome. The polypeptide is Large ribosomal subunit protein uL22 (Methanococcus maripaludis (strain DSM 14266 / JCM 13030 / NBRC 101832 / S2 / LL)).